A 325-amino-acid chain; its full sequence is Cytochrome c biogenesis protein CcsA (325 aa).

Transmembrane regions (helical) follow at residues 12 to 32 (HISF…LLFV), 45 to 65 (GMII…VFSG), 72 to 92 (LYES…VPYF), 100 to 120 (LNTI…SGLL), 145 to 165 (MILG…ILVI), 231 to 251 (TISL…VWAN), 264 to 281 (ETWA…LHTR), and 293 to 313 (IVAS…NLLG).

Belongs to the CcmF/CycK/Ccl1/NrfE/CcsA family. May interact with Ccs1.

The protein resides in the plastid. Its subcellular location is the chloroplast thylakoid membrane. Required during biogenesis of c-type cytochromes (cytochrome c6 and cytochrome f) at the step of heme attachment. In Glycine max (Soybean), this protein is Cytochrome c biogenesis protein CcsA.